We begin with the raw amino-acid sequence, 194 residues long: Peptide deformylase (194 aa).

Fe cation-binding residues include cysteine 105 and histidine 147. Residue glutamate 148 is part of the active site. Residue histidine 151 participates in Fe cation binding.

It belongs to the polypeptide deformylase family. Fe(2+) is required as a cofactor.

The enzyme catalyses N-terminal N-formyl-L-methionyl-[peptide] + H2O = N-terminal L-methionyl-[peptide] + formate. Functionally, removes the formyl group from the N-terminal Met of newly synthesized proteins. Requires at least a dipeptide for an efficient rate of reaction. N-terminal L-methionine is a prerequisite for activity but the enzyme has broad specificity at other positions. The sequence is that of Peptide deformylase from Flavobacterium psychrophilum (strain ATCC 49511 / DSM 21280 / CIP 103535 / JIP02/86).